Reading from the N-terminus, the 1035-residue chain is Protein SEY1 homolog (1035 aa).

Residues Asp-32–Ser-267 form the GB1/RHD3-type G domain. A GTP-binding site is contributed by Gly-42 to Ser-49.

Belongs to the TRAFAC class dynamin-like GTPase superfamily. GB1/RHD3 GTPase family. RHD3 subfamily.

It is found in the endoplasmic reticulum membrane. Probable GTP-binding protein that may be involved in cell development. This chain is Protein SEY1 homolog, found in Giardia intestinalis (strain ATCC 50803 / WB clone C6) (Giardia lamblia).